The following is a 101-amino-acid chain: Putative pterin-4-alpha-carbinolamine dehydratase (101 aa).

It belongs to the pterin-4-alpha-carbinolamine dehydratase family.

It carries out the reaction (4aS,6R)-4a-hydroxy-L-erythro-5,6,7,8-tetrahydrobiopterin = (6R)-L-erythro-6,7-dihydrobiopterin + H2O. The polypeptide is Putative pterin-4-alpha-carbinolamine dehydratase (Nitrobacter hamburgensis (strain DSM 10229 / NCIMB 13809 / X14)).